A 139-amino-acid polypeptide reads, in one-letter code: Ribulose bisphosphate carboxylase small subunit (139 aa).

It belongs to the RuBisCO small chain family. In terms of assembly, heterohexadecamer of 8 large and 8 small subunits.

It is found in the plastid. The protein resides in the chloroplast. Its function is as follows. RuBisCO catalyzes two reactions: the carboxylation of D-ribulose 1,5-bisphosphate, the primary event in carbon dioxide fixation, as well as the oxidative fragmentation of the pentose substrate in the photorespiration process. Both reactions occur simultaneously and in competition at the same active site. Although the small subunit is not catalytic it is essential for maximal activity. The polypeptide is Ribulose bisphosphate carboxylase small subunit (Olisthodiscus luteus (Marine phytoflagellate)).